The primary structure comprises 236 residues: Protein EVI2A (236 aa).

The signal sequence occupies residues 1 to 30 (MPTDMEHTGHYLHLAFLMTTVFSLSPGTKA). Residues Asn-31, Asn-38, Asn-49, Asn-73, and Asn-112 are each glycosylated (N-linked (GlcNAc...) asparagine). Topologically, residues 31 to 133 (NYTRLWANST…DVCAENNNNM (103 aa)) are extracellular. Residues 134 to 154 (AMLICLIIIAVLFLICTFLFL) traverse the membrane as a helical segment. The Cytoplasmic portion of the chain corresponds to 155-236 (STVVLANKVS…TEKLTNKQIG (82 aa)). Residue Ser-211 is modified to Phosphoserine. Residues 217-236 (ATRERKDEEGTEKLTNKQIG) are disordered. Positions 218–236 (TRERKDEEGTEKLTNKQIG) are enriched in basic and acidic residues.

It belongs to the EVI2A family.

It is found in the membrane. Functionally, may complex with itself or/and other proteins within the membrane, to function as part of a cell-surface receptor. The sequence is that of Protein EVI2A (EVI2A) from Homo sapiens (Human).